The sequence spans 563 residues: Arginine--tRNA ligase (563 aa).

A 'HIGH' region motif is present at residues 120–130; the sequence is PNIAKPFHIGH.

This sequence belongs to the class-I aminoacyl-tRNA synthetase family. In terms of assembly, monomer.

Its subcellular location is the cytoplasm. The catalysed reaction is tRNA(Arg) + L-arginine + ATP = L-arginyl-tRNA(Arg) + AMP + diphosphate. In Clostridium botulinum (strain Langeland / NCTC 10281 / Type F), this protein is Arginine--tRNA ligase.